We begin with the raw amino-acid sequence, 239 residues long: Uridylate kinase (239 aa).

10-13 (KLSG) lines the ATP pocket. Residue Gly52 participates in UMP binding. The ATP site is built by Gly53 and Arg57. UMP is bound by residues Asp72 and 133-140 (TGNPFFTT). 3 residues coordinate ATP: Thr160, Tyr166, and Asp169.

The protein belongs to the UMP kinase family. As to quaternary structure, homohexamer.

It is found in the cytoplasm. The catalysed reaction is UMP + ATP = UDP + ADP. It functions in the pathway pyrimidine metabolism; CTP biosynthesis via de novo pathway; UDP from UMP (UMPK route): step 1/1. Inhibited by UTP. In terms of biological role, catalyzes the reversible phosphorylation of UMP to UDP. This Porphyromonas gingivalis (strain ATCC BAA-308 / W83) protein is Uridylate kinase.